The sequence spans 172 residues: Adenine phosphoribosyltransferase (172 aa).

This sequence belongs to the purine/pyrimidine phosphoribosyltransferase family. In terms of assembly, homodimer.

The protein resides in the cytoplasm. The catalysed reaction is AMP + diphosphate = 5-phospho-alpha-D-ribose 1-diphosphate + adenine. It functions in the pathway purine metabolism; AMP biosynthesis via salvage pathway; AMP from adenine: step 1/1. Catalyzes a salvage reaction resulting in the formation of AMP, that is energically less costly than de novo synthesis. This Synechococcus sp. (strain CC9311) protein is Adenine phosphoribosyltransferase.